The sequence spans 115 residues: Macrophage migration inhibitory factor homolog (115 aa).

Proline 2 acts as the Proton acceptor; via imino nitrogen in catalysis. Substrate contacts are provided by lysine 33 and isoleucine 65.

It belongs to the MIF family.

It is found in the secreted. The catalysed reaction is L-dopachrome = 5,6-dihydroxyindole-2-carboxylate. It carries out the reaction 3-phenylpyruvate = enol-phenylpyruvate. Its function is as follows. Tautomerization of the methyl ester of L-dopachrome. Inhibits migration of human peripheral blood mononuclear cells. The chain is Macrophage migration inhibitory factor homolog from Brugia malayi (Filarial nematode worm).